The primary structure comprises 222 residues: 7-carboxy-7-deazaguanine synthase (222 aa).

Residues 16–18 (LQG) and Arg-31 each bind substrate. Residues 22–222 (NLGRPAVFVR…IMAWGNARGK (201 aa)) enclose the Radical SAM core domain. Positions 35, 39, and 42 each coordinate [4Fe-4S] cluster. Thr-44 is a binding site for Mg(2+). Thr-77 provides a ligand contact to substrate. Residues Gly-79 and 126–128 (SPK) each bind S-adenosyl-L-methionine.

The protein belongs to the radical SAM superfamily. 7-carboxy-7-deazaguanine synthase family. As to quaternary structure, homodimer. The cofactor is [4Fe-4S] cluster. Requires S-adenosyl-L-methionine as cofactor. Mg(2+) serves as cofactor.

It carries out the reaction 6-carboxy-5,6,7,8-tetrahydropterin + H(+) = 7-carboxy-7-deazaguanine + NH4(+). Its pathway is purine metabolism; 7-cyano-7-deazaguanine biosynthesis. Catalyzes the complex heterocyclic radical-mediated conversion of 6-carboxy-5,6,7,8-tetrahydropterin (CPH4) to 7-carboxy-7-deazaguanine (CDG), a step common to the biosynthetic pathways of all 7-deazapurine-containing compounds. The sequence is that of 7-carboxy-7-deazaguanine synthase from Pyrobaculum aerophilum (strain ATCC 51768 / DSM 7523 / JCM 9630 / CIP 104966 / NBRC 100827 / IM2).